Here is a 253-residue protein sequence, read N- to C-terminus: DnaJ homolog subfamily C member 8 (253 aa).

At Ala-2 the chain carries N-acetylalanine. Ser-35 bears the Phosphoserine mark. Positions 57-124 (NPFEVLQIDP…QKKRALDVIQ (68 aa)) constitute a J domain. Residue Lys-146 is modified to N6-acetyllysine. Over residues 181-222 (EAKEMHERKRQREEEIEAQEKAKREREWQKNFEESRDGRVDS) the composition is skewed to basic and acidic residues. The tract at residues 181–253 (EAKEMHERKR…PPKVKMEQRE (73 aa)) is disordered. 2 short sequence motifs (nuclear localization signal) span residues 189–192 (KRQR) and 203–206 (KRER). Residue Ser-222 is modified to Phosphoserine. Basic residues predominate over residues 231 to 240 (KGKKEKKNRT). An essential for polyglutamine aggregation suppression region spans residues 232–253 (GKKEKKNRTFLRPPKVKMEQRE).

Interacts with SRPK1. Interacts with HSP70 (HSPA1A or HSPA1B).

It is found in the nucleus. Its function is as follows. Suppresses polyglutamine (polyQ) aggregation of ATXN3 in neuronal cells. This Mus musculus (Mouse) protein is DnaJ homolog subfamily C member 8 (Dnajc8).